The following is a 275-amino-acid chain: Uroporphyrinogen-III synthase (275 aa).

It belongs to the uroporphyrinogen-III synthase family.

It catalyses the reaction hydroxymethylbilane = uroporphyrinogen III + H2O. The protein operates within porphyrin-containing compound metabolism; protoporphyrin-IX biosynthesis; coproporphyrinogen-III from 5-aminolevulinate: step 3/4. In terms of biological role, catalyzes cyclization of the linear tetrapyrrole, hydroxymethylbilane, to the macrocyclic uroporphyrinogen III, the fourth step in the heme biosynthetic pathway. The polypeptide is Uroporphyrinogen-III synthase (Saccharomyces cerevisiae (strain ATCC 204508 / S288c) (Baker's yeast)).